The chain runs to 469 residues: 3-isopropylmalate dehydratase large subunit (469 aa).

[4Fe-4S] cluster-binding residues include C347, C410, and C413.

It belongs to the aconitase/IPM isomerase family. LeuC type 1 subfamily. Heterodimer of LeuC and LeuD. [4Fe-4S] cluster serves as cofactor.

It catalyses the reaction (2R,3S)-3-isopropylmalate = (2S)-2-isopropylmalate. Its pathway is amino-acid biosynthesis; L-leucine biosynthesis; L-leucine from 3-methyl-2-oxobutanoate: step 2/4. Its function is as follows. Catalyzes the isomerization between 2-isopropylmalate and 3-isopropylmalate, via the formation of 2-isopropylmaleate. The chain is 3-isopropylmalate dehydratase large subunit from Ralstonia nicotianae (strain ATCC BAA-1114 / GMI1000) (Ralstonia solanacearum).